Reading from the N-terminus, the 93-residue chain is Small ribosomal subunit protein uS19 (93 aa).

Belongs to the universal ribosomal protein uS19 family.

In terms of biological role, protein S19 forms a complex with S13 that binds strongly to the 16S ribosomal RNA. The chain is Small ribosomal subunit protein uS19 from Citrifermentans bemidjiense (strain ATCC BAA-1014 / DSM 16622 / JCM 12645 / Bem) (Geobacter bemidjiensis).